A 318-amino-acid chain; its full sequence is L-lactate dehydrogenase 1 (318 aa).

Residues V17, D38, K43, Y69, and 83-84 contribute to the NAD(+) site; that span reads GA. Residues Q86, R92, and 124–127 contribute to the substrate site; that span reads NPVD. NAD(+) contacts are provided by residues 122–124 and S147; that span reads ATN. 152-155 provides a ligand contact to substrate; that stretch reads DTGR. Positions 157 and 172 each coordinate beta-D-fructose 1,6-bisphosphate. The active-site Proton acceptor is the H179. At Y224 the chain carries Phosphotyrosine. T233 contacts substrate.

This sequence belongs to the LDH/MDH superfamily. LDH family. In terms of assembly, homotetramer.

It localises to the cytoplasm. It catalyses the reaction (S)-lactate + NAD(+) = pyruvate + NADH + H(+). Its pathway is fermentation; pyruvate fermentation to lactate; (S)-lactate from pyruvate: step 1/1. With respect to regulation, allosterically activated by fructose 1,6-bisphosphate (FBP). In terms of biological role, catalyzes the conversion of lactate to pyruvate. The polypeptide is L-lactate dehydrogenase 1 (Peribacillus psychrosaccharolyticus (Bacillus psychrosaccharolyticus)).